A 179-amino-acid polypeptide reads, in one-letter code: MDKVEVSELHVRIGQVKIGSPGQVLTAILGSCVGIGFFFPQRQIYGLAHCLLSQSSSQPVASSAAQTGRTREDGQLVGNGRHVDKAIESLLKMMDIQDEERRQLRVVLAGGANMSMPFDTPPSQLVGSVNAKFARQAIRSAGLRLLGDDLGGLNGRRISINCDSGEYDIQQIPRLGGTV.

It belongs to the CheD family.

It catalyses the reaction L-glutaminyl-[protein] + H2O = L-glutamyl-[protein] + NH4(+). In terms of biological role, probably deamidates glutamine residues to glutamate on methyl-accepting chemotaxis receptors (MCPs), playing an important role in chemotaxis. In Ruegeria sp. (strain TM1040) (Silicibacter sp.), this protein is Probable chemoreceptor glutamine deamidase CheD 2.